The primary structure comprises 917 residues: MEANQEASLFLVKILEELDSKQNTVSYQDLCKSLCAQFDLSQLAKLRSVLFYTACLDPNFPATLFKDKMKCSVNNQQSKKIMVAADIVTIFNLIQMNGGTAKEKLPTSCHKVRKEEASFESCRSDAEVCSPTVCEPLNCELSERPFSRGYPTRQSSKCRKMDCKECPQFVPASEPNFLLGVSKEVKNRAASLDRLQALSPYSVASPQPCEMQRTYFPMNIENESISDQDSLPIGQGIKETFISSEEPFMVQSCVQKRNIFKEDFHNLMTVSPSLVGTTNKAEEDHGEPRSQKELHKPPFFNHSFEMPYHSQYLNPVYSPIPDKRRAKHESLDDLQASTYFGPTPVMGTQDTRRCPGRPSKQTPWPAKSWSLNTEEVPDFERSFFNRNPSEEKLRYPNSGNQTPNFSGPDRHPVYLVPKDQQKVLPAGYAVKPNGLKSKEIPSPVDLEKHEAVKKFKDKSISCTSGQHSSDTSSVGTQTEQHVLDPPKCKDLCSAGQAKYSDRHAMKHSDDDSEIVSDDISDIFRFLDDMSISGSTGVIQSSCYNSTGSLSQLHKSDCDSSPEHNLAKITNGVSGSKGDKCNRPENVHHSEEELKSSVCKLVLRIGEIERKLESLAGVREEISQVLGKLNKLDQKIQQPEKVNVQIDLNSLTSEAPSDDSASPRVFHAHSGSHGPKLENSPDWCCSDVSGSNSESLRVKALKKSLFTRPSSRSLTEENSATESKIASISNSPRDWRTITYTNRMSLNEEEIKDAGPANNKDWHRKSKEADRQYDIPPQHRLPKQPKDGFLVEQVFSPHPYPSSLKAHMKSNPLYTDMRLTELAEVKRGQPSWNIEEYARNTGDKGKLTALDLQTQESLNPNNLEYWMEDIYTPGYDSLLKRKEAEFRRAKVCKIAALITAAACTVILVIVVPICTMKS.

The Cytoplasmic segment spans residues 1–892; the sequence is MEANQEASLF…AEFRRAKVCK (892 aa). Disordered regions lie at residues 337–367, 389–410, 457–476, 568–588, 652–679, 706–727, and 746–783; these read STYF…WPAK, SEEK…GPDR, DKSI…SVGT, ITNG…NVHH, SEAP…LENS, TRPS…IASI, and NEEE…LPKQ. The segment covering 460–476 has biased composition (polar residues); sequence ISCTSGQHSSDTSSVGT. The span at 576–588 shows a compositional bias: basic and acidic residues; it reads KGDKCNRPENVHH. Serine 712 bears the Phosphoserine mark. A helical transmembrane segment spans residues 893-913; sequence IAALITAAACTVILVIVVPIC. The Extracellular segment spans residues 914 to 917; that stretch reads TMKS.

This sequence belongs to the MINAR family. As to quaternary structure, interacts with NOTCH2; this interaction increases MINAR1 stability. Interacts (via N-terminus) with DEPTOR (via PDZ domain); this interaction may stabilize DEPTOR protein by impairing its ubiquitination.

It is found in the cell membrane. In terms of biological role, intrinsically disordered protein which may negatively regulate mTOR signaling pathway by stabilizing the mTOR complex component DEPTOR. Negatively regulates angiogenesis. Negatively regulates cell growth. Negatively regulates neurite outgrowth in hippocampal neurons. The chain is Major intrinsically disordered Notch2-binding receptor 1 (Minar1) from Rattus norvegicus (Rat).